Here is a 345-residue protein sequence, read N- to C-terminus: Phenylalanine--tRNA ligase alpha subunit (345 aa).

E259 is a Mg(2+) binding site.

This sequence belongs to the class-II aminoacyl-tRNA synthetase family. Phe-tRNA synthetase alpha subunit type 1 subfamily. As to quaternary structure, tetramer of two alpha and two beta subunits. It depends on Mg(2+) as a cofactor.

It localises to the cytoplasm. The catalysed reaction is tRNA(Phe) + L-phenylalanine + ATP = L-phenylalanyl-tRNA(Phe) + AMP + diphosphate + H(+). This Lactococcus lactis subsp. cremoris (strain MG1363) protein is Phenylalanine--tRNA ligase alpha subunit.